The following is a 472-amino-acid chain: Chromosomal replication initiator protein DnaA (472 aa).

A domain I, interacts with DnaA modulators region spans residues 1-73 (MSNMEHDRWS…LTCWQAEMPE (73 aa)). The interval 73–128 (EVCRIDLTVRSPMRAAVTKEAPAPAEHRRDEHRPAADARSHAAAPAPSNHDALGGS) is domain II. A disordered region spans residues 89–127 (VTKEAPAPAEHRRDEHRPAADARSHAAAPAPSNHDALGG). Over residues 97 to 112 (AEHRRDEHRPAADARS) the composition is skewed to basic and acidic residues. Residues 113–124 (HAAAPAPSNHDA) are compositionally biased toward low complexity. Positions 129-351 (PLDPRLTFAS…GAINRLLAHS (223 aa)) are domain III, AAA+ region. ATP is bound by residues Gly176, Gly178, Lys179, and Thr180. A domain IV, binds dsDNA region spans residues 352–472 (KLNAQPVTLE…VESLKRQLQE (121 aa)).

It belongs to the DnaA family. In terms of assembly, oligomerizes as a right-handed, spiral filament on DNA at oriC.

The protein localises to the cytoplasm. Functionally, plays an essential role in the initiation and regulation of chromosomal replication. ATP-DnaA binds to the origin of replication (oriC) to initiate formation of the DNA replication initiation complex once per cell cycle. Binds the DnaA box (a 9 base pair repeat at the origin) and separates the double-stranded (ds)DNA. Forms a right-handed helical filament on oriC DNA; dsDNA binds to the exterior of the filament while single-stranded (ss)DNA is stabiized in the filament's interior. The ATP-DnaA-oriC complex binds and stabilizes one strand of the AT-rich DNA unwinding element (DUE), permitting loading of DNA polymerase. After initiation quickly degrades to an ADP-DnaA complex that is not apt for DNA replication. Binds acidic phospholipids. This chain is Chromosomal replication initiator protein DnaA, found in Rhodopseudomonas palustris (strain BisB5).